The primary structure comprises 440 residues: Branched-chain amino acid permease BrnQ (440 aa).

The next 12 membrane-spanning stretches (helical) occupy residues 9–29 (YIII…NLIF), 46–66 (AGFL…FVFS), 80–100 (PVFG…FFAI), 121–141 (SPVS…LLSL), 149–169 (IVGK…VAVA), 196–216 (GYLT…VNAL), 227–247 (LIVV…VMYT), 284–304 (ILLG…LITA), 321–341 (IAVV…TQLI), 348–368 (LLTM…HSVF), 378–398 (SLLF…GIKI), and 414–434 (IGLG…ILSI).

It belongs to the branched chain amino acid transporter family.

It localises to the cell membrane. Functionally, branched-chain amino acid transport system which is involved in the uptake of isoleucine and valine. Probably does not transport leucine. Together with BcaP and BraB, plays an important role in the activation of CodY, a branched-chain amino acid-responsive transcriptional regulator that controls the expression of several dozen transcription units in B.subtilis. The polypeptide is Branched-chain amino acid permease BrnQ (Bacillus subtilis (strain 168)).